Here is a 470-residue protein sequence, read N- to C-terminus: UDP-N-acetylmuramoylalanine--D-glutamate ligase (470 aa).

ATP is bound at residue 121-127 (GTNGKST).

Belongs to the MurCDEF family.

The protein localises to the cytoplasm. It catalyses the reaction UDP-N-acetyl-alpha-D-muramoyl-L-alanine + D-glutamate + ATP = UDP-N-acetyl-alpha-D-muramoyl-L-alanyl-D-glutamate + ADP + phosphate + H(+). Its pathway is cell wall biogenesis; peptidoglycan biosynthesis. In terms of biological role, cell wall formation. Catalyzes the addition of glutamate to the nucleotide precursor UDP-N-acetylmuramoyl-L-alanine (UMA). The chain is UDP-N-acetylmuramoylalanine--D-glutamate ligase from Rhizobium etli (strain ATCC 51251 / DSM 11541 / JCM 21823 / NBRC 15573 / CFN 42).